Here is a 130-residue protein sequence, read N- to C-terminus: Protein 7.7 (130 aa).

This is Protein 7.7 from Escherichia phage T7 (Bacteriophage T7).